The following is a 587-amino-acid chain: MTLFKVYARALRYLGAYKLRVSLVVVANIVLATITIAEPILFGRIIDAISGKGEVKPILFMWATFAVFNTIAFVLVAREADRLAHGRRATLLTEAFGRIISMPLGWHHQRGTSNALHTLLRACETLFGLWLEFMRNHLSTVIALALLIPTAMSMDLRLSAVLMVLAIAYWLIGRVVMSRTKDGQASVENHYHTVFSHVSDSISNVSVLHSYNRIEAETRALKSFADRLLEAQYPVLDWWAIASALNRMASTIAMMVVLIIGTMLVQAGQLRVGDVIAFIGFANLLIGRLDLMRQFATQIFEARSKLEEFYALEDSVREREEPAGNGEIKDVKGAIEFRDVSFGFGNSSQGLHNVSFSVKAGQTVAIVGPTGAGKTTLVNLLQRVYDAQGGKILVDGTDITKVTRKSLRRHIATVFQDAGLLNRSISDNIRLGREGASEEEMRRAAEAAAAADFIETREDRYDTHVGERGNKLSGGERQRIAIARAILKDAPILVLDEATSALDVETEARVKAAIDNLRQNRTTFIIAHRLSTVREADMVLFLDDGRVVEQGSFDELSHSNGRFAALLRASGILTDEEVRKAHTTEAA.

The 281-residue stretch at 21–301 folds into the ABC transmembrane type-1 domain; the sequence is VSLVVVANIV…MRQFATQIFE (281 aa). 6 helical membrane-spanning segments follow: residues 23–43, 57–77, 128–148, 158–178, 248–268, and 272–292; these read LVVV…ILFG, PILF…VLVA, GLWL…ALLI, LSAV…VVMS, MAST…VQAG, and VGDV…LDLM. Positions 335–569 constitute an ABC transporter domain; the sequence is IEFRDVSFGF…NGRFAALLRA (235 aa). 368-375 serves as a coordination point for ATP; that stretch reads GPTGAGKT.

The protein belongs to the ABC transporter superfamily. Beta-(1--&gt;2)glucan exporter (TC 3.A.1.108.1) family. Homodimer.

Its subcellular location is the cell inner membrane. It carries out the reaction [(1-&gt;2)-beta-D-glucosyl](n)(in) + ATP + H2O = [(1-&gt;2)-beta-D-glucosyl](n)(out) + ADP + phosphate + H(+). Involved in beta-(1--&gt;2)glucan export. Transmembrane domains (TMD) form a pore in the inner membrane and the ATP-binding domain (NBD) is responsible for energy generation. The polypeptide is Beta-(1--&gt;2)glucan export ATP-binding/permease protein NdvA (Rhizobium johnstonii (strain DSM 114642 / LMG 32736 / 3841) (Rhizobium leguminosarum bv. viciae)).